Here is a 131-residue protein sequence, read N- to C-terminus: Large ribosomal subunit protein bL12 (131 aa).

It belongs to the bacterial ribosomal protein bL12 family. Homodimer. Part of the ribosomal stalk of the 50S ribosomal subunit. Forms a multimeric L10(L12)X complex, where L10 forms an elongated spine to which 2 to 4 L12 dimers bind in a sequential fashion. Binds GTP-bound translation factors.

In terms of biological role, forms part of the ribosomal stalk which helps the ribosome interact with GTP-bound translation factors. Is thus essential for accurate translation. The protein is Large ribosomal subunit protein bL12 of Prochlorococcus marinus subsp. pastoris (strain CCMP1986 / NIES-2087 / MED4).